Reading from the N-terminus, the 145-residue chain is D-aminoacyl-tRNA deacylase (145 aa).

Positions 137–138 (GP) match the Gly-cisPro motif, important for rejection of L-amino acids motif.

Belongs to the DTD family. As to quaternary structure, homodimer.

The protein localises to the cytoplasm. It carries out the reaction glycyl-tRNA(Ala) + H2O = tRNA(Ala) + glycine + H(+). It catalyses the reaction a D-aminoacyl-tRNA + H2O = a tRNA + a D-alpha-amino acid + H(+). In terms of biological role, an aminoacyl-tRNA editing enzyme that deacylates mischarged D-aminoacyl-tRNAs. Also deacylates mischarged glycyl-tRNA(Ala), protecting cells against glycine mischarging by AlaRS. Acts via tRNA-based rather than protein-based catalysis; rejects L-amino acids rather than detecting D-amino acids in the active site. By recycling D-aminoacyl-tRNA to D-amino acids and free tRNA molecules, this enzyme counteracts the toxicity associated with the formation of D-aminoacyl-tRNA entities in vivo and helps enforce protein L-homochirality. This chain is D-aminoacyl-tRNA deacylase, found in Shewanella piezotolerans (strain WP3 / JCM 13877).